A 430-amino-acid polypeptide reads, in one-letter code: MKVSTLIIVSIPIVSGLQIKDTVGTTTENTFWYQLFGTPSRSQPAAVAATAAGTEVQGFTPISTSSSSSSSSAAPWYQGLFGVGRTTLGQVTTPSRTSTTTTTSNPIAPTTSIANSNNLFGTDTAPTTTTTTNARSRSRSTPVTVSGDNVLTLFGNPNLSTGNDQSNSVSKTTAETTTTSSAPSSSSRVQPTVINGGGSDGVLTLFGNSEALSNFDSTTVVDSDSTARITPIASASASSGSSTKDNDSDSSSARGIKSIPNSSEFLASLINGLGSGGGGNGSGSNTNSYKNHSTTSTTSKYFNSSSTATKLSSSKSIYSNSTTSRSSLSVSSSSTDGGGGANLFGSLLNSVAAVSRTLAAESTLSTGTTTTSDSANSNTKDYSSYSGTITSFPSTTGSLSGDGNKLIGGNKYLISFMWTNLILTMIMLFT.

Residues 1-16 (MKVSTLIIVSIPIVSG) form the signal peptide. Disordered stretches follow at residues 88-195 (LGQV…TVIN), 232-257 (IASA…RGIK), 278-302 (GGNG…SKYF), and 314-336 (SKSI…SSTD). 2 stretches are compositionally biased toward low complexity: residues 92–112 (TTPS…PTTS) and 122–135 (TDTA…TNAR). Residues 141-167 (TPVTVSGDNVLTLFGNPNLSTGNDQSN) show a composition bias toward polar residues. Composition is skewed to low complexity over residues 168–187 (SVSK…SSSS) and 233–253 (ASAS…SSSA). Over residues 289 to 302 (YKNHSTTSTTSKYF) the composition is skewed to polar residues. Positions 314–335 (SKSIYSNSTTSRSSLSVSSSST) are enriched in low complexity. Residue G401 is the site of GPI-anchor amidated glycine attachment. The propeptide at 402–430 (DGNKLIGGNKYLISFMWTNLILTMIMLFT) is removed in mature form.

It is found in the cell membrane. Putative adhesin which is involved in cell adhesion and virulence. The chain is Probable GPI-anchored adhesin-like protein PGA32 (PGA32) from Candida albicans (strain SC5314 / ATCC MYA-2876) (Yeast).